Consider the following 196-residue polypeptide: Holliday junction branch migration complex subunit RuvA (196 aa).

Residues 1–63 (MYDYIKGKLS…DDAHLLFGFH (63 aa)) are domain I. The domain II stretch occupies residues 64–142 (TENEKEIFLN…EASGESATSR (79 aa)). The interval 143-148 (KVSSEQ) is flexible linker. The domain III stretch occupies residues 148 to 196 (QNSNLEEAMEALLALGYKATELKKVKAFFEGTNETVEQYIKSSLKMLMK).

The protein belongs to the RuvA family. In terms of assembly, homotetramer. Forms an RuvA(8)-RuvB(12)-Holliday junction (HJ) complex. HJ DNA is sandwiched between 2 RuvA tetramers; dsDNA enters through RuvA and exits via RuvB. An RuvB hexamer assembles on each DNA strand where it exits the tetramer. Each RuvB hexamer is contacted by two RuvA subunits (via domain III) on 2 adjacent RuvB subunits; this complex drives branch migration. In the full resolvosome a probable DNA-RuvA(4)-RuvB(12)-RuvC(2) complex forms which resolves the HJ.

The protein resides in the cytoplasm. Functionally, the RuvA-RuvB-RuvC complex processes Holliday junction (HJ) DNA during genetic recombination and DNA repair, while the RuvA-RuvB complex plays an important role in the rescue of blocked DNA replication forks via replication fork reversal (RFR). RuvA specifically binds to HJ cruciform DNA, conferring on it an open structure. The RuvB hexamer acts as an ATP-dependent pump, pulling dsDNA into and through the RuvAB complex. HJ branch migration allows RuvC to scan DNA until it finds its consensus sequence, where it cleaves and resolves the cruciform DNA. In Streptococcus agalactiae serotype III (strain NEM316), this protein is Holliday junction branch migration complex subunit RuvA.